The chain runs to 144 residues: uncharacterized protein (144 aa).

This is an uncharacterized protein from Vibrio parahaemolyticus serotype O3:K6 (strain RIMD 2210633).